We begin with the raw amino-acid sequence, 248 residues long: Small ribosomal subunit protein uS2 (248 aa).

Belongs to the universal ribosomal protein uS2 family.

The sequence is that of Small ribosomal subunit protein uS2 from Herminiimonas arsenicoxydans.